Consider the following 291-residue polypeptide: Cytosolic Fe-S cluster assembly factor CFD1 (291 aa).

24-31 (GKGGVGKS) serves as a coordination point for ATP. [4Fe-4S] cluster-binding residues include Cys199 and Cys202. Positions 270-291 (ENEEEAKETAEEEKSRAATNGQ) are disordered. Basic and acidic residues predominate over residues 276–285 (KETAEEEKSR).

The protein belongs to the Mrp/NBP35 ATP-binding proteins family. NUBP2/CFD1 subfamily. As to quaternary structure, heterotetramer of 2 NBP35 and 2 CFD1 chains. It depends on [4Fe-4S] cluster as a cofactor.

It localises to the cytoplasm. Functionally, component of the cytosolic iron-sulfur (Fe/S) protein assembly (CIA) machinery. Required for maturation of extramitochondrial Fe-S proteins. The NBP35-CFD1 heterotetramer forms a Fe-S scaffold complex, mediating the de novo assembly of an Fe-S cluster and its transfer to target apoproteins. Required for biogenesis and export of both ribosomal subunits, which may reflect a role in assembly of the Fe/S clusters in RLI1, a protein which performs rRNA processing and ribosome export. This is Cytosolic Fe-S cluster assembly factor CFD1 from Yarrowia lipolytica (strain CLIB 122 / E 150) (Yeast).